The following is a 500-amino-acid chain: Glycerol kinase (500 aa).

Residue T16 coordinates ADP. Residues T16 and T17 each coordinate ATP. Sn-glycerol 3-phosphate is bound at residue T16. Position 20 (R20) interacts with ADP. Residues R86, E87, Y138, and D243 each coordinate sn-glycerol 3-phosphate. 5 residues coordinate glycerol: R86, E87, Y138, D243, and Q244. Residues T265 and G313 each coordinate ADP. ATP is bound by residues T265, G313, Q317, and G414. Positions 414 and 418 each coordinate ADP.

This sequence belongs to the FGGY kinase family.

The enzyme catalyses glycerol + ATP = sn-glycerol 3-phosphate + ADP + H(+). Its pathway is polyol metabolism; glycerol degradation via glycerol kinase pathway; sn-glycerol 3-phosphate from glycerol: step 1/1. Inhibited by fructose 1,6-bisphosphate (FBP). In terms of biological role, key enzyme in the regulation of glycerol uptake and metabolism. Catalyzes the phosphorylation of glycerol to yield sn-glycerol 3-phosphate. The sequence is that of Glycerol kinase from Nostoc sp. (strain PCC 7120 / SAG 25.82 / UTEX 2576).